The sequence spans 122 residues: Small ribosomal subunit protein uS13 (122 aa).

Residues 95–122 (GLPVRGQRTKTNARTRKGPKKTIAGKKK) form a disordered region.

This sequence belongs to the universal ribosomal protein uS13 family. As to quaternary structure, part of the 30S ribosomal subunit. Forms a loose heterodimer with protein S19. Forms two bridges to the 50S subunit in the 70S ribosome.

In terms of biological role, located at the top of the head of the 30S subunit, it contacts several helices of the 16S rRNA. In the 70S ribosome it contacts the 23S rRNA (bridge B1a) and protein L5 of the 50S subunit (bridge B1b), connecting the 2 subunits; these bridges are implicated in subunit movement. Contacts the tRNAs in the A and P-sites. This Corynebacterium diphtheriae (strain ATCC 700971 / NCTC 13129 / Biotype gravis) protein is Small ribosomal subunit protein uS13.